Consider the following 469-residue polypeptide: Proline--tRNA ligase (469 aa).

The protein belongs to the class-II aminoacyl-tRNA synthetase family. ProS type 3 subfamily. In terms of assembly, homodimer.

Its subcellular location is the cytoplasm. The catalysed reaction is tRNA(Pro) + L-proline + ATP = L-prolyl-tRNA(Pro) + AMP + diphosphate. In terms of biological role, catalyzes the attachment of proline to tRNA(Pro) in a two-step reaction: proline is first activated by ATP to form Pro-AMP and then transferred to the acceptor end of tRNA(Pro). This chain is Proline--tRNA ligase, found in Methanobrevibacter smithii (strain ATCC 35061 / DSM 861 / OCM 144 / PS).